Here is a 272-residue protein sequence, read N- to C-terminus: Ribosomal RNA small subunit methyltransferase A (272 aa).

S-adenosyl-L-methionine-binding residues include N18, L20, G45, E66, D91, and N113.

It belongs to the class I-like SAM-binding methyltransferase superfamily. rRNA adenine N(6)-methyltransferase family. RsmA subfamily.

The protein localises to the cytoplasm. The catalysed reaction is adenosine(1518)/adenosine(1519) in 16S rRNA + 4 S-adenosyl-L-methionine = N(6)-dimethyladenosine(1518)/N(6)-dimethyladenosine(1519) in 16S rRNA + 4 S-adenosyl-L-homocysteine + 4 H(+). Its function is as follows. Specifically dimethylates two adjacent adenosines (A1518 and A1519) in the loop of a conserved hairpin near the 3'-end of 16S rRNA in the 30S particle. May play a critical role in biogenesis of 30S subunits. The protein is Ribosomal RNA small subunit methyltransferase A of Yersinia pestis bv. Antiqua (strain Antiqua).